We begin with the raw amino-acid sequence, 1031 residues long: Serine-repeat antigen protein 6 (1031 aa).

A signal peptide spans 1-24 (MICPIFFLYIINVLFTQYFIKCEG). N-linked (GlcNAc...) asparagine glycosylation occurs at Asn74. A compositionally biased stretch (low complexity) spans 91–101 (KVVSSSESGKG). Positions 91-163 (KVVSSSESGK…TESSSETLNK (73 aa)) are disordered. Polar residues predominate over residues 104–139 (VSHTKVTSEGLSDTQPNVTQSVSSSTHTPGSLDSTM). An N-linked (GlcNAc...) asparagine glycan is attached at Asn120. The segment covering 140-158 (STEQHSSVSQSSLPTESSS) has biased composition (low complexity). Residue Asn449 is glycosylated (N-linked (GlcNAc...) asparagine). The segment at 490-567 (TLPSESPSES…GDTNYVYDFD (78 aa)) is disordered. Positions 492 to 505 (PSESPSESSSKSDS) are enriched in low complexity. A compositionally biased stretch (basic and acidic residues) spans 511–535 (NDKDKNEDKDDMSKNSKEEFKNDDK). Residue Asn544 is glycosylated (N-linked (GlcNAc...) asparagine). Over residues 554–564 (NINNGDTNYVY) the composition is skewed to low complexity. An N-linked (GlcNAc...) asparagine glycan is attached at Asn573. Cys644 is a catalytic residue. Residue Asn674 is glycosylated (N-linked (GlcNAc...) asparagine). Active-site residues include His810 and Asn835. N-linked (GlcNAc...) asparagine glycosylation is found at Asn929 and Asn974.

The protein belongs to the peptidase C1 family. Just prior to merozoite egress from host erythrocytes, proteolytically cleaved by SUB1 to generate the active 75kDa form.

Its subcellular location is the parasitophorous vacuole lumen. It is found in the parasitophorous vacuole membrane. Functionally, cysteine protease which plays an essential role in merozoite egress from host erythrocytes. May cleave host SPTB/beta spectrin and ANK1/ankyrin-1 which disrupts host erythrocyte actin cytoskeleton and leads to host erythrocyte cell membrane rupture. The sequence is that of Serine-repeat antigen protein 6 from Plasmodium falciparum (isolate 3D7).